The sequence spans 396 residues: MTGFFTILSFSLAALSVTNAAQILSVPKGAEVVPNGYIVVMKDDTSQQDFSSHRVWISSIHHNMTRRGLDGAGVKQTYDFDHLRGYSGIFDEDTIKDISNDPKVAFVEPDAIISQHVVVQQRKAPWGLSRLSNRRGGRNYVFDSSAGSGVWAYVVDSGVDVRHAEFQGRAVWGSNLVDNKNSDGTGHGTHVAGTIAGKTYGIAKKAKVVAVKVLNSEGKGPTSGIIAGINWSIRHARKHGMLQKSVLNMSLGGTYSAGLNHATAQAIKAGMFVSVSAGNDNINSNGNSPASERSVCTIAASTENDGKASFSNWGPAVDLYAPGHNILSARPGGGSQTMSGTSMAAPHAAGVAAYLIAKEGIPGNRACLRLKQLSQPTIRNPGPDTTSRLLYNGSGR.

Residues 1–20 (MTGFFTILSFSLAALSVTNA) form the signal peptide. A propeptide spanning residues 21 to 116 (AQILSVPKGA…VEPDAIISQH (96 aa)) is cleaved from the precursor. The region spanning 37-113 (YIVVMKDDTS…VAFVEPDAII (77 aa)) is the Inhibitor I9 domain. N-linked (GlcNAc...) asparagine glycosylation occurs at Asn-63. The Peptidase S8 domain occupies 125 to 396 (PWGLSRLSNR…SRLLYNGSGR (272 aa)). Residues Asp-156 and His-187 each act as charge relay system in the active site. Asn-230 and Asn-248 each carry an N-linked (GlcNAc...) asparagine glycan. The Charge relay system role is filled by Ser-342. Polar residues predominate over residues 376–389 (PTIRNPGPDTTSRL). The segment at 376–396 (PTIRNPGPDTTSRLLYNGSGR) is disordered. Asn-392 is a glycosylation site (N-linked (GlcNAc...) asparagine).

Belongs to the peptidase S8 family.

It localises to the secreted. Functionally, secreted subtilisin-like serine protease with keratinolytic activity that contributes to pathogenicity. In Trichophyton verrucosum (Cattle ringworm fungus), this protein is Subtilisin-like protease 5 (SUB5).